We begin with the raw amino-acid sequence, 208 residues long: Ribosomal RNA large subunit methyltransferase E (208 aa).

Glycine 62, tryptophan 64, aspartate 82, aspartate 98, and aspartate 123 together coordinate S-adenosyl-L-methionine. The Proton acceptor role is filled by lysine 163.

The protein belongs to the class I-like SAM-binding methyltransferase superfamily. RNA methyltransferase RlmE family.

The protein localises to the cytoplasm. It carries out the reaction uridine(2552) in 23S rRNA + S-adenosyl-L-methionine = 2'-O-methyluridine(2552) in 23S rRNA + S-adenosyl-L-homocysteine + H(+). In terms of biological role, specifically methylates the uridine in position 2552 of 23S rRNA at the 2'-O position of the ribose in the fully assembled 50S ribosomal subunit. This Haemophilus ducreyi (strain 35000HP / ATCC 700724) protein is Ribosomal RNA large subunit methyltransferase E.